The following is a 168-amino-acid chain: ATP synthase subunit b (168 aa).

The helical transmembrane segment at 7–26 (FVLSNFIFTLINLWIMYWVL) threads the bilayer.

This sequence belongs to the ATPase B chain family. F-type ATPases have 2 components, F(1) - the catalytic core - and F(0) - the membrane proton channel. F(1) has five subunits: alpha(3), beta(3), gamma(1), delta(1), epsilon(1). F(0) has three main subunits: a(1), b(2) and c(10-14). The alpha and beta chains form an alternating ring which encloses part of the gamma chain. F(1) is attached to F(0) by a central stalk formed by the gamma and epsilon chains, while a peripheral stalk is formed by the delta and b chains.

The protein localises to the cell membrane. In terms of biological role, f(1)F(0) ATP synthase produces ATP from ADP in the presence of a proton or sodium gradient. F-type ATPases consist of two structural domains, F(1) containing the extramembraneous catalytic core and F(0) containing the membrane proton channel, linked together by a central stalk and a peripheral stalk. During catalysis, ATP synthesis in the catalytic domain of F(1) is coupled via a rotary mechanism of the central stalk subunits to proton translocation. Functionally, component of the F(0) channel, it forms part of the peripheral stalk, linking F(1) to F(0). This chain is ATP synthase subunit b, found in Alkaliphilus metalliredigens (strain QYMF).